Here is a 317-residue protein sequence, read N- to C-terminus: Acetyl-coenzyme A carboxylase carboxyl transferase subunit alpha (317 aa).

The 254-residue stretch at 40 to 293 (LEGRVRDAMV…ETVIGDALKE (254 aa)) folds into the CoA carboxyltransferase C-terminal domain.

It belongs to the AccA family. As to quaternary structure, acetyl-CoA carboxylase is a heterohexamer composed of biotin carboxyl carrier protein (AccB), biotin carboxylase (AccC) and two subunits each of ACCase subunit alpha (AccA) and ACCase subunit beta (AccD).

Its subcellular location is the cytoplasm. It carries out the reaction N(6)-carboxybiotinyl-L-lysyl-[protein] + acetyl-CoA = N(6)-biotinyl-L-lysyl-[protein] + malonyl-CoA. It functions in the pathway lipid metabolism; malonyl-CoA biosynthesis; malonyl-CoA from acetyl-CoA: step 1/1. In terms of biological role, component of the acetyl coenzyme A carboxylase (ACC) complex. First, biotin carboxylase catalyzes the carboxylation of biotin on its carrier protein (BCCP) and then the CO(2) group is transferred by the carboxyltransferase to acetyl-CoA to form malonyl-CoA. The chain is Acetyl-coenzyme A carboxylase carboxyl transferase subunit alpha from Rhizobium meliloti (strain 1021) (Ensifer meliloti).